We begin with the raw amino-acid sequence, 184 residues long: Peptidyl-tRNA hydrolase (184 aa).

Position 17 (Y17) interacts with tRNA. H22 serves as the catalytic Proton acceptor. TRNA is bound by residues F71, N73, and N119.

It belongs to the PTH family. Monomer.

It is found in the cytoplasm. It catalyses the reaction an N-acyl-L-alpha-aminoacyl-tRNA + H2O = an N-acyl-L-amino acid + a tRNA + H(+). In terms of biological role, hydrolyzes ribosome-free peptidyl-tRNAs (with 1 or more amino acids incorporated), which drop off the ribosome during protein synthesis, or as a result of ribosome stalling. Its function is as follows. Catalyzes the release of premature peptidyl moieties from peptidyl-tRNA molecules trapped in stalled 50S ribosomal subunits, and thus maintains levels of free tRNAs and 50S ribosomes. The chain is Peptidyl-tRNA hydrolase from Corynebacterium diphtheriae (strain ATCC 700971 / NCTC 13129 / Biotype gravis).